Here is a 504-residue protein sequence, read N- to C-terminus: MSLICSISNEVPEHPCVSPVSNHVYERRLIEKYIAENGTDPINNQPLSEEQLIDIKVAHPIRPKPPSATSIPAILKALQDEWDAVMLHSFTLRQQLQTTRQELSHALYQHDAACRVIARLTKEVTAAREALATLKPQAGLIVPQAVPSSQPSVVGAGEPMDLGELVGMTPEIIQKLQDKATVLTTERKKRGKTVPEELVKPEELSKYRQVASHVGLHSASIPGILALDLCPSDTNKILTGGADKNVVVFDKSSEQILATLKGHTKKVTSVVFHPSQELVFSASPDATIRIWSVPNASCVQVVRAHESAVTGLSLHATGDYLLSSSDDQYWAFSDIQTGRVLTKVTDETSGCSLTCAQFHPDGLIFGTGTMDSQIKIWDLKERTNVANFPGHSGPITSIAFSENGYYLATAADDSSVKLWDLRKLKNFKTLQLDNNFEVKSLIFDQSGTYLALGGTDVQIYICKQWTEILHFTEHSGLTTGVAFGHHAKFIASTGMDRSLKFYSL.

An N-acetylserine modification is found at S2. One can recognise a U-box domain in the interval 2 to 73 (SLICSISNEV…KPPSATSIPA (72 aa)). Positions 68 to 223 (ATSIPAILKA…VGLHSASIPG (156 aa)) are may mediate interaction with PSMC5. An N6-acetyllysine mark is found at K122, K179, K244, and K261. Residues 219-259 (ASIPGILALDLCPSDTNKILTGGADKNVVVFDKSSEQILAT) form a WD 1 repeat. 6 WD repeats span residues 262 to 301 (GHTK…CVQV), 304 to 345 (AHES…TKVT), 348 to 387 (TSGC…NVAN), 390 to 429 (GHSG…NFKT), 433 to 472 (DNNF…LHFT), and 473 to 503 (EHSG…KFYS).

It belongs to the WD repeat PRP19 family. Homotetramer. Component of activated, catalytic and post-catalytic spliceosomes. Component of the Prp19 complex/PRP19C/Nineteen complex/NTC and related complexes described as PRP19-CDC5L splicing complex and PSO4 complex. A homotetramer of PRPF19, CDC5L, PLRG1 and BCAS2 constitute the core of those complexes. The interaction with CDC5L, PLRG1 and BCAS2 is direct within this core complex. At least three less stably associated proteins CTNNBL1, CWC15 and HSPA8 are found in the Prp19 complex. The Prp19 complex associates with the spliceosome during its assembly and remodeling recruiting additional proteins. Component of the XAB2 complex, a multimeric protein complex composed of XAB2, PRPF19, AQR, ZNF830, ISY1, and PPIE. Interacts with CWC22 and EIF4A3 in an RNA-independent manner. Interacts with RPA1 and RPA2; the PRP19-CDC5L complex is recruited to the sites of DNA repair where it interacts with the replication protein A complex (RPA). Interacts with SETMAR; required for SETMAR recruitment to site of DNA damage. Interacts with U2AF2; the interaction is direct and recruits the Prp19 complex to RNA polymerase II C-terminal domain (CTD) and the pre-mRNA. Interacts with PRPF3. Interacts with APEX1, DNTT and PSMB4. Interacts with PSMC5. Interacts with KNSTRN. Interacts (via N-terminus) with CDC5L. Interacts with KHDC4. Interacts with USB1. Interacts with DDX41.

The protein localises to the nucleus. The protein resides in the nucleoplasm. It is found in the cytoplasm. Its subcellular location is the cytoskeleton. It localises to the spindle. The protein localises to the lipid droplet. It catalyses the reaction S-ubiquitinyl-[E2 ubiquitin-conjugating enzyme]-L-cysteine + [acceptor protein]-L-lysine = [E2 ubiquitin-conjugating enzyme]-L-cysteine + N(6)-ubiquitinyl-[acceptor protein]-L-lysine.. The protein operates within protein modification; protein ubiquitination. Ubiquitin-protein ligase which is a core component of several complexes mainly involved pre-mRNA splicing and DNA repair. Required for pre-mRNA splicing as component of the spliceosome. Core component of the PRP19C/Prp19 complex/NTC/Nineteen complex which is part of the spliceosome and participates in its assembly, its remodeling and is required for its activity. During assembly of the spliceosome, mediates 'Lys-63'-linked polyubiquitination of the U4 spliceosomal protein PRPF3. Ubiquitination of PRPF3 allows its recognition by the U5 component PRPF8 and stabilizes the U4/U5/U6 tri-snRNP spliceosomal complex. Recruited to RNA polymerase II C-terminal domain (CTD) and the pre-mRNA, it may also couple the transcriptional and spliceosomal machineries. The XAB2 complex, which contains PRPF19, is also involved in pre-mRNA splicing, transcription and transcription-coupled repair. Beside its role in pre-mRNA splicing PRPF19, as part of the PRP19-CDC5L complex, plays a role in the DNA damage response/DDR. It is recruited to the sites of DNA damage by the RPA complex where PRPF19 directly ubiquitinates RPA1 and RPA2. 'Lys-63'-linked polyubiquitination of the RPA complex allows the recruitment of the ATR-ATRIP complex and the activation of ATR, a master regulator of the DNA damage response. May also play a role in DNA double-strand break (DSB) repair by recruiting the repair factor SETMAR to altered DNA. As part of the PSO4 complex may also be involved in the DNA interstrand cross-links/ICLs repair process. In addition, may also mediate 'Lys-48'-linked polyubiquitination of substrates and play a role in proteasomal degradation. May play a role in the biogenesis of lipid droplets. May play a role in neural differentiation possibly through its function as part of the spliceosome. This is Pre-mRNA-processing factor 19 (PRPF19) from Bos taurus (Bovine).